Here is a 333-residue protein sequence, read N- to C-terminus: Glycerol-3-phosphate dehydrogenase [NAD(P)+] (333 aa).

Residues tryptophan 12, histidine 31, and lysine 105 each contribute to the NADPH site. The sn-glycerol 3-phosphate site is built by lysine 105, glycine 134, and serine 136. Position 138 (alanine 138) interacts with NADPH. Positions 189, 242, 252, 253, and 254 each coordinate sn-glycerol 3-phosphate. Lysine 189 serves as the catalytic Proton acceptor. Arginine 253 contributes to the NADPH binding site. Valine 278 and glutamate 280 together coordinate NADPH.

The protein belongs to the NAD-dependent glycerol-3-phosphate dehydrogenase family.

It is found in the cytoplasm. It catalyses the reaction sn-glycerol 3-phosphate + NAD(+) = dihydroxyacetone phosphate + NADH + H(+). It carries out the reaction sn-glycerol 3-phosphate + NADP(+) = dihydroxyacetone phosphate + NADPH + H(+). It participates in membrane lipid metabolism; glycerophospholipid metabolism. Catalyzes the reduction of the glycolytic intermediate dihydroxyacetone phosphate (DHAP) to sn-glycerol 3-phosphate (G3P), the key precursor for phospholipid synthesis. This chain is Glycerol-3-phosphate dehydrogenase [NAD(P)+], found in Brachyspira hyodysenteriae (strain ATCC 49526 / WA1).